The sequence spans 68 residues: MPKLKTKSAVKKRFKFTATGKVIASQAGKKHFMRRRTKAQIRNLRGTTILCPQDGYNIKKYFLPYGIN.

The protein belongs to the bacterial ribosomal protein bL35 family.

The chain is Large ribosomal subunit protein bL35 from Rickettsia typhi (strain ATCC VR-144 / Wilmington).